The chain runs to 484 residues: Trigger factor (484 aa).

The PPIase FKBP-type domain maps to 165 to 244; that stretch reads GDFVQIDLTA…VQSVKERELP (80 aa). The segment at 429–484 is disordered; it reads DAVSEEPADADAEAVVADAPAEEAAEAPAAEEAPAEKPKKKAPAKKKASEKAADSE. Residues 430 to 440 are compositionally biased toward acidic residues; the sequence is AVSEEPADADA. Basic and acidic residues predominate over residues 475–484; it reads KASEKAADSE.

It belongs to the FKBP-type PPIase family. Tig subfamily.

It localises to the cytoplasm. It carries out the reaction [protein]-peptidylproline (omega=180) = [protein]-peptidylproline (omega=0). Functionally, involved in protein export. Acts as a chaperone by maintaining the newly synthesized protein in an open conformation. Functions as a peptidyl-prolyl cis-trans isomerase. The sequence is that of Trigger factor from Clavibacter michiganensis subsp. michiganensis (strain NCPPB 382).